Here is a 147-residue protein sequence, read N- to C-terminus: Hemoglobin subunit beta-2 (147 aa).

The 145-residue stretch at 3–147 folds into the Globin domain; the sequence is EWTDSERAII…VVSALGRQYH (145 aa). Heme b contacts are provided by His64 and His93.

It belongs to the globin family. Hb 3 is a heterotetramer of two alpha-2 and two beta-2 chains. Red blood cells.

Involved in oxygen transport from gills to the various peripheral tissues. The polypeptide is Hemoglobin subunit beta-2 (hbb2) (Arctogadus glacialis (Arctic cod)).